We begin with the raw amino-acid sequence, 124 residues long: Putative calmodulin-3 (124 aa).

4 consecutive EF-hand domains span residues 1–18 (GCIT…LGQN), 19–54 (PTEA…KIKD), 56–91 (DFEE…LGEK), and 92–124 (LTDE…MMAK). Ca(2+) contacts are provided by Cys2, Glu7, Asp32, Asp34, Asn36, Thr38, Glu43, Asp69, Asp71, Asn73, and Glu80. Lys91 carries the post-translational modification N6,N6,N6-trimethyllysine. 5 residues coordinate Ca(2+): Asp105, Asp107, Asp109, Gln111, and Glu116.

This sequence belongs to the calmodulin family. As to expression, not detected in the organs tested.

In terms of biological role, calmodulin mediates the control of a large number of enzymes, ion channels and other proteins by Ca(2+). Among the enzymes to be stimulated by the calmodulin-Ca(2+) complex are a number of protein kinases and phosphatases. The sequence is that of Putative calmodulin-3 (PCM3) from Solanum tuberosum (Potato).